The following is a 444-amino-acid chain: NADH-quinone oxidoreductase subunit F (444 aa).

G62 to G71 lines the NAD(+) pocket. G177–T224 contributes to the FMN binding site. 4 residues coordinate [4Fe-4S] cluster: C354, C357, C360, and C401.

It belongs to the complex I 51 kDa subunit family. In terms of assembly, composed of 13 different subunits. Subunits NuoCD, E, F, and G constitute the peripheral sector of the complex. Requires [4Fe-4S] cluster as cofactor. FMN serves as cofactor.

The catalysed reaction is a quinone + NADH + 5 H(+)(in) = a quinol + NAD(+) + 4 H(+)(out). Its function is as follows. NDH-1 shuttles electrons from NADH, via FMN and iron-sulfur (Fe-S) centers, to quinones in the respiratory chain. Couples the redox reaction to proton translocation (for every two electrons transferred, four hydrogen ions are translocated across the cytoplasmic membrane), and thus conserves the redox energy in a proton gradient. This chain is NADH-quinone oxidoreductase subunit F (nuoF), found in Buchnera aphidicola subsp. Baizongia pistaciae (strain Bp).